The chain runs to 456 residues: Ribonuclease inhibitor (456 aa).

Met1 carries the post-translational modification N-acetylmethionine. LRR repeat units lie at residues 15–43 (WTEL…CKDI), 44–71 (SSAV…VGLV), 72–100 (LQGL…CGIL), 101–128 (PGML…LKLL), 129–157 (CEGL…CEPL), 158–185 (ASVL…VRIL), 186–214 (CQGL…CKDL), 215–242 (CDVV…IAAL), 243–271 (CPGL…CKDL), 272–299 (CRVL…ARLL), 300–328 (CESL…CPYF), 329–356 (CSVL…VQEL), 357–385 (CKAL…CSSL), 386–413 (ANVL…VLQL), and 414–442 (LESL…EEQL). Ser86 bears the Phosphoserine mark.

In terms of assembly, forms high-affinity heterodimers with RNASE1, ANG and RNASE2.

The protein resides in the cytoplasm. It localises to the nucleus. Its function is as follows. Ribonuclease inhibitor which inhibits RNASE1, RNASE2 and angiogenin (ANG). May play a role in redox homeostasis. Required to inhibit the cytotoxic tRNA ribonuclease activity of ANG in the cytoplasm in absence of stress. Relocates to the nucleus in response to stress, relieving inhibition of ANG in the cytoplasm, and inhibiting the angiogenic activity of ANG in the nucleus. This Mus musculus (Mouse) protein is Ribonuclease inhibitor (Rnh1).